A 389-amino-acid chain; its full sequence is (2R)-sulfolactate sulfo-lyase subunit beta (389 aa).

The protein belongs to the UxaA family. (2R)-sulfolactate sulfo-lyase is composed of a SuyA and a SuyB subunit.

The protein localises to the cytoplasm. The enzyme catalyses (2R)-3-sulfolactate = sulfite + pyruvate + H(+). Together with SuyA, desulfonates sulfolactate to pyruvate and sulfite. The protein is (2R)-sulfolactate sulfo-lyase subunit beta (suyB) of Chromohalobacter salexigens (strain ATCC BAA-138 / DSM 3043 / CIP 106854 / NCIMB 13768 / 1H11).